The primary structure comprises 125 residues: UPF0225 protein Cgl1438/cg1626 (125 aa).

Belongs to the UPF0225 family.

The chain is UPF0225 protein Cgl1438/cg1626 from Corynebacterium glutamicum (strain ATCC 13032 / DSM 20300 / JCM 1318 / BCRC 11384 / CCUG 27702 / LMG 3730 / NBRC 12168 / NCIMB 10025 / NRRL B-2784 / 534).